Consider the following 252-residue polypeptide: ATP synthase subunit a (252 aa).

The next 7 helical transmembrane spans lie at 6–26, 31–51, 88–108, 117–137, 144–164, 190–212, and 225–245; these read LEQF…YFSF, LFML…TLNG, FFPL…IGMI, HFII…IVGF, FFSI…LVLL, LVKI…YLGQ, and LELG…CIYL.

This sequence belongs to the ATPase A chain family. F-type ATPases have 2 components, CF(1) - the catalytic core - and CF(0) - the membrane proton channel. CF(1) has five subunits: alpha(3), beta(3), gamma(1), delta(1), epsilon(1). CF(0) has three main subunits: a, b and c.

The protein resides in the mitochondrion inner membrane. Mitochondrial membrane ATP synthase (F(1)F(0) ATP synthase or Complex V) produces ATP from ADP in the presence of a proton gradient across the membrane which is generated by electron transport complexes of the respiratory chain. F-type ATPases consist of two structural domains, F(1) - containing the extramembraneous catalytic core and F(0) - containing the membrane proton channel, linked together by a central stalk and a peripheral stalk. During catalysis, ATP synthesis in the catalytic domain of F(1) is coupled via a rotary mechanism of the central stalk subunits to proton translocation. Key component of the proton channel; it may play a direct role in the translocation of protons across the membrane. The sequence is that of ATP synthase subunit a (ATP6) from Marchantia polymorpha (Common liverwort).